Consider the following 1604-residue polypeptide: Chromatin-remodeling ATPase INO80 (1604 aa).

Positions 1–16 are enriched in basic and acidic residues; it reads MDPSRETFDGSTRDSY. 5 disordered regions span residues 1 to 38, 174 to 201, 266 to 285, 297 to 316, and 406 to 620; these read MDPS…RIPY, RPDA…SETP, PPAQ…HNRR, NSVV…EVVS, and EEKK…KTVE. The span at 28 to 38 shows a compositional bias: polar residues; sequence SELNTQNRIPY. The residue at position 179 (Thr179) is a Phosphothreonine. Positions 271–281 are enriched in polar residues; sequence LSPNSSQSQIT. The span at 406–429 shows a compositional bias: basic and acidic residues; sequence EEKKKKEREEQVRLLQESADKDAE. Over residues 457 to 470 the composition is skewed to polar residues; the sequence is TANSQATENNNTPS. Basic and acidic residues-rich tracts occupy residues 474 to 490 and 497 to 506; these read VKAE…DKSR and TNKDSEKNDN. Composition is skewed to polar residues over residues 507 to 526 and 543 to 553; these read NDAS…SPET and ANDTSKNANGE. Residue Ser518 is modified to Phosphoserine. Residues 557 to 566 show a composition bias toward basic residues; sequence TPKKSKKKTS. Composition is skewed to polar residues over residues 568–577 and 585–597; these read AQQEANSTTA and GDST…TNKE. A DBINO domain is found at 626–751; the sequence is VIKEIARKEI…SHFVGRKMDR (126 aa). Residues 792-820 form a disordered region; that stretch reads AREHSQLFDANRQQSPNNSSSDMNEGEMN. Polar residues predominate over residues 802 to 820; sequence NRQQSPNNSSSDMNEGEMN. The 173-residue stretch at 854–1026 folds into the Helicase ATP-binding domain; sequence ANLYEQGING…WALLHFIMPS (173 aa). 867-874 is an ATP binding site; that stretch reads DEMGLGKT. Positions 977–980 match the DEAQ box motif; that stretch reads DEAQ. The Helicase C-terminal domain maps to 1433–1591; the sequence is KLDKLLVELK…TRPTKQMDLK (159 aa).

Belongs to the SNF2/RAD54 helicase family. Component of the INO80 chromatin-remodeling complex.

Its subcellular location is the nucleus. The catalysed reaction is ATP + H2O = ADP + phosphate + H(+). Its function is as follows. ATPase component of the INO80 complex which remodels chromatin by shifting nucleosomes and is involved in DNA repair. The sequence is that of Chromatin-remodeling ATPase INO80 (ino80) from Schizosaccharomyces pombe (strain 972 / ATCC 24843) (Fission yeast).